A 300-amino-acid polypeptide reads, in one-letter code: N-acetylmuramic acid 6-phosphate etherase (300 aa).

In terms of domain architecture, SIS spans 57-220 (IAVAFQCGGR…TTGAMIRTGK (164 aa)). Glutamate 85 serves as the catalytic Proton donor. Residue glutamate 116 is part of the active site.

This sequence belongs to the GCKR-like family. MurNAc-6-P etherase subfamily. As to quaternary structure, homodimer.

The catalysed reaction is N-acetyl-D-muramate 6-phosphate + H2O = N-acetyl-D-glucosamine 6-phosphate + (R)-lactate. It participates in amino-sugar metabolism; 1,6-anhydro-N-acetylmuramate degradation. It functions in the pathway amino-sugar metabolism; N-acetylmuramate degradation. The protein operates within cell wall biogenesis; peptidoglycan recycling. Specifically catalyzes the cleavage of the D-lactyl ether substituent of MurNAc 6-phosphate, producing GlcNAc 6-phosphate and D-lactate. Together with AnmK, is also required for the utilization of anhydro-N-acetylmuramic acid (anhMurNAc) either imported from the medium or derived from its own cell wall murein, and thus plays a role in cell wall recycling. This is N-acetylmuramic acid 6-phosphate etherase from Aliivibrio salmonicida (strain LFI1238) (Vibrio salmonicida (strain LFI1238)).